A 57-amino-acid polypeptide reads, in one-letter code: uncharacterized protein (57 aa).

The helical transmembrane segment at 21-37 (GTYTLVVAFVLAFLVYS) threads the bilayer.

It is found in the host membrane. This is an uncharacterized protein from Human herpesvirus 6B (strain Z29) (HHV-6 variant B).